The sequence spans 144 residues: Putative pre-16S rRNA nuclease (144 aa).

This sequence belongs to the YqgF nuclease family.

Its subcellular location is the cytoplasm. In terms of biological role, could be a nuclease involved in processing of the 5'-end of pre-16S rRNA. The sequence is that of Putative pre-16S rRNA nuclease from Pseudomonas aeruginosa (strain LESB58).